Reading from the N-terminus, the 238-residue chain is Ribonuclease PH (238 aa).

Phosphate-binding positions include Arg86 and 124-126 (GTR).

It belongs to the RNase PH family. Homohexameric ring arranged as a trimer of dimers.

The enzyme catalyses tRNA(n+1) + phosphate = tRNA(n) + a ribonucleoside 5'-diphosphate. In terms of biological role, phosphorolytic 3'-5' exoribonuclease that plays an important role in tRNA 3'-end maturation. Removes nucleotide residues following the 3'-CCA terminus of tRNAs; can also add nucleotides to the ends of RNA molecules by using nucleoside diphosphates as substrates, but this may not be physiologically important. Probably plays a role in initiation of 16S rRNA degradation (leading to ribosome degradation) during starvation. The polypeptide is Ribonuclease PH (Salmonella choleraesuis (strain SC-B67)).